We begin with the raw amino-acid sequence, 415 residues long: MSYETVREADPAVADALEGERGRQNDTLAMIASENHVSEAVMEAQSSELTNKYAEGYPGERYYGGCEYADDVEELAIDRAKELWGADHVNVQPHSGSQANMGVYLGVLEPGDKILSLDLTHGGHLSHGHPANFAGQVYEVEQYKVDEETGYVDYEGLHDHAEEFEPDIIVSGYSAYPREVDFERIQEAADAVDAYHLADIAHITGLVAAGVHESPVGVADFVTGSTHKTIRAGRGGIIMCDEEYADDIDAAVFPGSQGGPLMHNVAGKAVGFGEALAPEFEQYAQQTVDNAIALGEQFKEHGLSLVSGGTDNHLVLIDLRPSHPDTTGKEVEEALEEAGIVLNANTVPGETRSAFNPSGIRAGTPALTTRGFDEDACREVADLIYKVVDAPHDDDVVAEVSDRVDEMTDEYTLYE.

Residues L119 and 123–125 (GHL) contribute to the (6S)-5,6,7,8-tetrahydrofolate site. K228 is modified (N6-(pyridoxal phosphate)lysine). 353-355 (SAF) is a (6S)-5,6,7,8-tetrahydrofolate binding site.

It belongs to the SHMT family. Homodimer. It depends on pyridoxal 5'-phosphate as a cofactor.

Its subcellular location is the cytoplasm. The catalysed reaction is (6R)-5,10-methylene-5,6,7,8-tetrahydrofolate + glycine + H2O = (6S)-5,6,7,8-tetrahydrofolate + L-serine. The protein operates within one-carbon metabolism; tetrahydrofolate interconversion. Its pathway is amino-acid biosynthesis; glycine biosynthesis; glycine from L-serine: step 1/1. Functionally, catalyzes the reversible interconversion of serine and glycine with tetrahydrofolate (THF) serving as the one-carbon carrier. Also exhibits THF-independent aldolase activity toward beta-hydroxyamino acids, producing glycine and aldehydes, via a retro-aldol mechanism. In Haloarcula marismortui (strain ATCC 43049 / DSM 3752 / JCM 8966 / VKM B-1809) (Halobacterium marismortui), this protein is Serine hydroxymethyltransferase.